The following is a 246-amino-acid chain: Acetoacetate decarboxylase (246 aa).

Lysine 116 functions as the Schiff-base intermediate with acetoacetate in the catalytic mechanism.

This sequence belongs to the ADC family. As to quaternary structure, homododecamer.

It carries out the reaction acetoacetate + H(+) = acetone + CO2. Its function is as follows. Catalyzes the conversion of acetoacetate to acetone and carbon dioxide. This Chromobacterium violaceum (strain ATCC 12472 / DSM 30191 / JCM 1249 / CCUG 213 / NBRC 12614 / NCIMB 9131 / NCTC 9757 / MK) protein is Acetoacetate decarboxylase.